We begin with the raw amino-acid sequence, 31 residues long: Cytochrome b6-f complex subunit 6 (31 aa).

A helical membrane pass occupies residues 3 to 23 (AIVAYIGFLALFTGIAAGLLF).

This sequence belongs to the PetL family. In terms of assembly, the 4 large subunits of the cytochrome b6-f complex are cytochrome b6, subunit IV (17 kDa polypeptide, PetD), cytochrome f and the Rieske protein, while the 4 small subunits are PetG, PetL, PetM and PetN. The complex functions as a dimer.

The protein localises to the cellular thylakoid membrane. Functionally, component of the cytochrome b6-f complex, which mediates electron transfer between photosystem II (PSII) and photosystem I (PSI), cyclic electron flow around PSI, and state transitions. PetL is important for photoautotrophic growth as well as for electron transfer efficiency and stability of the cytochrome b6-f complex. This is Cytochrome b6-f complex subunit 6 from Nostoc sp. (strain PCC 7120 / SAG 25.82 / UTEX 2576).